Reading from the N-terminus, the 321-residue chain is Probable arabinan endo-1,5-alpha-L-arabinosidase C (321 aa).

Residues 1–18 (MYLYTLILLFLASANVNA) form the signal peptide. Asp-33 (proton acceptor) is an active-site residue. Asn-192 carries N-linked (GlcNAc...) asparagine glycosylation. The active-site Proton donor is Glu-200. An N-linked (GlcNAc...) asparagine glycan is attached at Asn-224.

Belongs to the glycosyl hydrolase 43 family.

The protein localises to the secreted. It catalyses the reaction Endohydrolysis of (1-&gt;5)-alpha-arabinofuranosidic linkages in (1-&gt;5)-arabinans.. It participates in glycan metabolism; L-arabinan degradation. In terms of biological role, endo-1,5-alpha-L-arabinanase involved in degradation of pectin. Its preferred substrate is linear 1,5-alpha-L-arabinan. This Aspergillus fumigatus (strain CBS 144.89 / FGSC A1163 / CEA10) (Neosartorya fumigata) protein is Probable arabinan endo-1,5-alpha-L-arabinosidase C (abnC).